The chain runs to 167 residues: Small ribosomal subunit protein uS5 (167 aa).

In terms of domain architecture, S5 DRBM spans Leu-12–Ile-75.

This sequence belongs to the universal ribosomal protein uS5 family. In terms of assembly, part of the 30S ribosomal subunit. Contacts proteins S4 and S8.

Its function is as follows. With S4 and S12 plays an important role in translational accuracy. Located at the back of the 30S subunit body where it stabilizes the conformation of the head with respect to the body. This Buchnera aphidicola subsp. Acyrthosiphon pisum (strain APS) (Acyrthosiphon pisum symbiotic bacterium) protein is Small ribosomal subunit protein uS5.